The sequence spans 155 residues: Sweet protein mabinlin-2 (155 aa).

A signal peptide spans 1 to 20 (MAKLIFLFATLALFVLLANA). The propeptide occupies 21–35 (SIQTTVIEVDEEEDN). Q36 bears the Pyrrolidone carboxylic acid mark. 4 cysteine pairs are disulfide-bonded: C40/C103, C53/C92, C93/C141, and C105/C149. The segment at 64-86 (GGQPDELEDEVEDDNDDENQPRR) is disordered. A compositionally biased stretch (acidic residues) spans 68 to 81 (DELEDEVEDDNDDE). The propeptide occupies 69-82 (ELEDEVEDDNDDEN). Q83 carries the pyrrolidone carboxylic acid modification. A propeptide is located at residue P155.

It belongs to the 2S seed storage albumins family. As to quaternary structure, heterodimer of a small A and a large B chain linked by disulfide bonds.

Heat stable 2S seed storage protein having sweetness-inducing activity. This is Sweet protein mabinlin-2 from Capparis masaikai (Mabinlang).